A 957-amino-acid chain; its full sequence is Glycine dehydrogenase (decarboxylating) (957 aa).

Position 708 is an N6-(pyridoxal phosphate)lysine (Lys708).

The protein belongs to the GcvP family. The glycine cleavage system is composed of four proteins: P, T, L and H. The cofactor is pyridoxal 5'-phosphate.

It catalyses the reaction N(6)-[(R)-lipoyl]-L-lysyl-[glycine-cleavage complex H protein] + glycine + H(+) = N(6)-[(R)-S(8)-aminomethyldihydrolipoyl]-L-lysyl-[glycine-cleavage complex H protein] + CO2. In terms of biological role, the glycine cleavage system catalyzes the degradation of glycine. The P protein binds the alpha-amino group of glycine through its pyridoxal phosphate cofactor; CO(2) is released and the remaining methylamine moiety is then transferred to the lipoamide cofactor of the H protein. This chain is Glycine dehydrogenase (decarboxylating), found in Escherichia fergusonii (strain ATCC 35469 / DSM 13698 / CCUG 18766 / IAM 14443 / JCM 21226 / LMG 7866 / NBRC 102419 / NCTC 12128 / CDC 0568-73).